The sequence spans 537 residues: 2-succinyl-5-enolpyruvyl-6-hydroxy-3-cyclohexene-1-carboxylate synthase (537 aa).

This sequence belongs to the TPP enzyme family. MenD subfamily. As to quaternary structure, homodimer. It depends on Mg(2+) as a cofactor. The cofactor is Mn(2+). Thiamine diphosphate serves as cofactor.

The catalysed reaction is isochorismate + 2-oxoglutarate + H(+) = 5-enolpyruvoyl-6-hydroxy-2-succinyl-cyclohex-3-ene-1-carboxylate + CO2. The protein operates within quinol/quinone metabolism; 1,4-dihydroxy-2-naphthoate biosynthesis; 1,4-dihydroxy-2-naphthoate from chorismate: step 2/7. Its pathway is quinol/quinone metabolism; menaquinone biosynthesis. In terms of biological role, catalyzes the thiamine diphosphate-dependent decarboxylation of 2-oxoglutarate and the subsequent addition of the resulting succinic semialdehyde-thiamine pyrophosphate anion to isochorismate to yield 2-succinyl-5-enolpyruvyl-6-hydroxy-3-cyclohexene-1-carboxylate (SEPHCHC). The chain is 2-succinyl-5-enolpyruvyl-6-hydroxy-3-cyclohexene-1-carboxylate synthase from Desulfotalea psychrophila (strain LSv54 / DSM 12343).